A 524-amino-acid chain; its full sequence is Citrate exporter 1 (524 aa).

Positions 1–49 are disordered; it reads MSSTTSSSRSDLEKVPVPQVTPRDSDSDKGSLSPEPSTLEAQSSEKPPH. A compositionally biased stretch (polar residues) spans 34-45; that stretch reads PEPSTLEAQSSE. A helical membrane pass occupies residues 60 to 80; sequence MVCIVSLAAIFSPLSSNIYFP. The N-linked (GlcNAc...) asparagine glycan is linked to asparagine 90. Transmembrane regions (helical) follow at residues 95-115, 125-145, 155-175, 186-206, and 215-235; these read LATLTITVYMIVQGLAPSFWG, PVFIGTFIVYLVANIALAESK, ALQAAGSAATISIGAGVIGDI, GIFGGVRMLGQGIGPVFGGIF, and IFWFLTIAGGVSLLSILVLLP. Asparagine 244 is a glycosylation site (N-linked (GlcNAc...) asparagine). 6 helical membrane-spanning segments follow: residues 296-316, 332-352, 395-415, 417-437, 459-479, and 481-501; these read VFITLFFGSIVYTVWSMVTSS, IGLTFLGNGFGCMSGSYLVGY, TWWVIAIFIVTVALYGVSLRT, LAVPIILQYFIAFCSTGLFTI, LMRCLLGAGGVAIVQPILDAL, and PDYTFLLLAGITLVMTPLLYV.

The protein belongs to the major facilitator superfamily.

Its subcellular location is the cell membrane. It catalyses the reaction citrate(in) = citrate(out). In terms of biological role, transmembrane transporter that exports citrate across the cell membrane. This chain is Citrate exporter 1, found in Aspergillus niger (strain ATCC 1015 / CBS 113.46 / FGSC A1144 / LSHB Ac4 / NCTC 3858a / NRRL 328 / USDA 3528.7).